The chain runs to 390 residues: MGATTMDQKSLWAGVVVLLLLQGGSAYKLVCYFTNWSQDRQEPGKFTPENIDPFLCSHLIYSFASIENNKVIIKDKSEVMLYQTINSLKTKNPKLKILLSIGGYLFGSKGFHPMVDSSTSRLEFINSIILFLRNHNFDGLDVSWIYPDQKENTHFTVLIHELAEAFQKDFTKSTKERLLLTAGVSAGRQMIDNSYQVEKLAKDLDFINLLSFDFHGSWEKPLITGHNSPLSKGWQDRGPSSYYNVEYAVGYWIHKGMPSEKVVMGIPTYGHSFTLASAETTVGAPASGPGAAGPITESSGFLAYYEICQFLKGAKITRLQDQQVPYAVKGNQWVGYDDVKSMETKVQFLKNLNLGGAMIWSIDMDDFTGKSCNQGPYPLVQAVKRSLGSL.

The N-terminal stretch at Met1–Ala26 is a signal peptide. The GH18 domain maps to Tyr27 to Leu390. A disulfide bond links Cys31 and Cys56. N-linked (GlcNAc...) asparagine glycosylation occurs at Asn35. Chitin contacts are provided by residues Asp75–Lys76, Gly102–Leu105, Tyr104, Tyr146, Leu210–Asp213, Asp213, and Trp360.

The protein belongs to the glycosyl hydrolase 18 family. As to expression, highest expression in chondrocytes, followed by synoviocytes, lung and heart. Not detected in spleen, pancreas, and liver. May also be expressed in developing brain and placenta.

The protein localises to the secreted. Functionally, lectin that binds chitooligosaccharides and other glycans with high affinity, but not heparin. Has no chitinase activity. The chain is Chitinase-3-like protein 2 (CHI3L2) from Homo sapiens (Human).